Consider the following 198-residue polypeptide: Transmembrane protein 17 (198 aa).

N-linked (GlcNAc...) asparagine glycosylation is found at Asn13 and Asn23. 4 helical membrane passes run 45 to 65 (MSLY…IMML), 78 to 98 (FIVV…LYLG), 110 to 130 (LAGF…FLLF), and 142 to 162 (AVHI…FLTL).

Belongs to the TMEM17 family. In terms of assembly, part of the tectonic-like complex (also named B9 complex).

It localises to the cell projection. The protein resides in the cilium membrane. In terms of biological role, transmembrane component of the tectonic-like complex, a complex localized at the transition zone of primary cilia and acting as a barrier that prevents diffusion of transmembrane proteins between the cilia and plasma membranes. Required for ciliogenesis and sonic hedgehog/SHH signaling. This chain is Transmembrane protein 17 (TMEM17), found in Bos taurus (Bovine).